Reading from the N-terminus, the 445-residue chain is 3-phosphoshikimate 1-carboxyvinyltransferase (445 aa).

Positions 28, 29, and 33 each coordinate 3-phosphoshikimate. Lysine 28 contacts phosphoenolpyruvate. Residues glycine 102 and arginine 130 each coordinate phosphoenolpyruvate. Residues serine 179, serine 180, glutamine 181, glutamate 330, and histidine 357 each contribute to the 3-phosphoshikimate site. Residue glutamine 181 coordinates phosphoenolpyruvate. The active-site Proton acceptor is glutamate 330. Arginine 361, arginine 405, and lysine 430 together coordinate phosphoenolpyruvate.

Belongs to the EPSP synthase family. In terms of assembly, monomer.

It localises to the cytoplasm. The enzyme catalyses 3-phosphoshikimate + phosphoenolpyruvate = 5-O-(1-carboxyvinyl)-3-phosphoshikimate + phosphate. It participates in metabolic intermediate biosynthesis; chorismate biosynthesis; chorismate from D-erythrose 4-phosphate and phosphoenolpyruvate: step 6/7. Functionally, catalyzes the transfer of the enolpyruvyl moiety of phosphoenolpyruvate (PEP) to the 5-hydroxyl of shikimate-3-phosphate (S3P) to produce enolpyruvyl shikimate-3-phosphate and inorganic phosphate. The protein is 3-phosphoshikimate 1-carboxyvinyltransferase of Bifidobacterium longum (strain DJO10A).